We begin with the raw amino-acid sequence, 188 residues long: M-phase phosphoprotein 6 homolog (188 aa).

The interval 93–188 is disordered; the sequence is EENVDEKDVS…NKNKKKKKRN (96 aa). A compositionally biased stretch (basic and acidic residues) spans 120–149; sequence LTERERRKQELVSKKAEASRKMEVKAPAKE. Ser167 bears the Phosphoserine mark. Positions 174–188 are enriched in basic residues; that stretch reads RKTKKNKNKKKKKRN.

It belongs to the MPP6 family. In terms of assembly, associates with the RNA exosome complex.

It is found in the nucleus. In terms of biological role, RNA-binding protein that associates with the RNA exosome complex. The polypeptide is M-phase phosphoprotein 6 homolog (Schizosaccharomyces pombe (strain 972 / ATCC 24843) (Fission yeast)).